The primary structure comprises 255 residues: 4-hydroxy-tetrahydrodipicolinate reductase (255 aa).

NAD(+) is bound by residues glycine 8–valine 13, glycine 88–threonine 90, and alanine 112–methionine 115. Histidine 144 functions as the Proton donor/acceptor in the catalytic mechanism. Histidine 145 lines the (S)-2,3,4,5-tetrahydrodipicolinate pocket. Lysine 148 serves as the catalytic Proton donor. Glycine 154–threonine 155 is a binding site for (S)-2,3,4,5-tetrahydrodipicolinate.

This sequence belongs to the DapB family.

The protein localises to the cytoplasm. It catalyses the reaction (S)-2,3,4,5-tetrahydrodipicolinate + NAD(+) + H2O = (2S,4S)-4-hydroxy-2,3,4,5-tetrahydrodipicolinate + NADH + H(+). The catalysed reaction is (S)-2,3,4,5-tetrahydrodipicolinate + NADP(+) + H2O = (2S,4S)-4-hydroxy-2,3,4,5-tetrahydrodipicolinate + NADPH + H(+). It functions in the pathway amino-acid biosynthesis; L-lysine biosynthesis via DAP pathway; (S)-tetrahydrodipicolinate from L-aspartate: step 4/4. Catalyzes the conversion of 4-hydroxy-tetrahydrodipicolinate (HTPA) to tetrahydrodipicolinate. The chain is 4-hydroxy-tetrahydrodipicolinate reductase from Sulfurimonas denitrificans (strain ATCC 33889 / DSM 1251) (Thiomicrospira denitrificans (strain ATCC 33889 / DSM 1251)).